The following is a 413-amino-acid chain: Serine hydroxymethyltransferase (413 aa).

(6S)-5,6,7,8-tetrahydrofolate contacts are provided by residues Leu119 and 123–125 (GHL). An N6-(pyridoxal phosphate)lysine modification is found at Lys228. (6S)-5,6,7,8-tetrahydrofolate is bound at residue Glu243.

The protein belongs to the SHMT family. Homodimer. It depends on pyridoxal 5'-phosphate as a cofactor.

Its subcellular location is the cytoplasm. The catalysed reaction is (6R)-5,10-methylene-5,6,7,8-tetrahydrofolate + glycine + H2O = (6S)-5,6,7,8-tetrahydrofolate + L-serine. It participates in one-carbon metabolism; tetrahydrofolate interconversion. It functions in the pathway amino-acid biosynthesis; glycine biosynthesis; glycine from L-serine: step 1/1. Its function is as follows. Catalyzes the reversible interconversion of serine and glycine with tetrahydrofolate (THF) serving as the one-carbon carrier. This reaction serves as the major source of one-carbon groups required for the biosynthesis of purines, thymidylate, methionine, and other important biomolecules. Also exhibits THF-independent aldolase activity toward beta-hydroxyamino acids, producing glycine and aldehydes, via a retro-aldol mechanism. The sequence is that of Serine hydroxymethyltransferase from Desulforamulus reducens (strain ATCC BAA-1160 / DSM 100696 / MI-1) (Desulfotomaculum reducens).